Consider the following 242-residue polypeptide: Placenta-expressed transcript 1 protein (242 aa).

Residues 1–26 form the signal peptide; that stretch reads MAVLRSLLPQLGLFLCLALCFSPALS. 3 N-linked (GlcNAc...) asparagine glycosylation sites follow: Asn47, Asn56, and Asn66. Ser223 carries GPI-anchor amidated serine lipidation. Residues 224 to 242 constitute a propeptide, removed in mature form; sequence PLAGALHILLVFLISKLLF.

Post-translationally, N-glycosylated. In terms of processing, GPI-anchored. In terms of tissue distribution, present at high level in the dermal sheath cells near the bulge area of the hair follicle and in the differentiated sebocytes of the normal adult skin (at protein level).

It is found in the apical cell membrane. Modulates leading keratinocyte migration and cellular adhesion to matrix proteins during a wound-healing response and promotes wound repair. May play a role during trichilemmal differentiation of the hair follicle. The sequence is that of Placenta-expressed transcript 1 protein (PLET1) from Mesocricetus auratus (Golden hamster).